The following is a 424-amino-acid chain: ATP synthase subunit beta, mitochondrial (424 aa).

The N-terminal 60 residues, 1–60 (MFRLSSGLLKGGACASRSRIPQLGRSLYSTATSAGADKTQGKIHTVIGAVVDVQFNHGRL), are a transit peptide targeting the mitochondrion. ATP-binding positions include 187-194 (GGAGVGKT), 188-195 (GAGVGKTV), 219-220 (ER), and Tyr374.

This sequence belongs to the ATPase alpha/beta chains family. In terms of assembly, F-type ATPases have 2 components, CF(1) - the catalytic core - and CF(0) - the membrane proton channel. CF(1) has five subunits: alpha(3), beta(3), gamma(1), delta(1), epsilon(1). CF(0) has three main subunits: a, b and c.

The protein localises to the mitochondrion. It localises to the mitochondrion inner membrane. It catalyses the reaction ATP + H2O + 4 H(+)(in) = ADP + phosphate + 5 H(+)(out). Its function is as follows. ATP synthase subunit beta; part of the gene cluster that mediates the biosynthesis of citreoviridin, an inhibitor of the of F1-ATPase beta-subunit. Mitochondrial membrane ATP synthase (F(1)F(0) ATP synthase or Complex V) produces ATP from ADP in the presence of a proton gradient across the membrane which is generated by electron transport complexes of the respiratory chain. Whereas ctvA to ctvD constitute the core biosynthetic gene cluster, ctvE acts as a self-resistance gene. The polypeptide is ATP synthase subunit beta, mitochondrial (Aspergillus terreus (strain NIH 2624 / FGSC A1156)).